The following is a 475-amino-acid chain: E3 ubiquitin-protein ligase TRIM62 (475 aa).

The RING-type zinc-finger motif lies at 11 to 54; it reads CSICLSIYQDPVSLGCEHYFCRRCITEHWVRQEAQGARDCPECR. The B box-type zinc finger occupies 88–128; it reads RAARPCQAHDKVKLFCLTDRALLCFFCDEPALHEQHQVTGI. Positions 93, 96, 114, and 120 each coordinate Zn(2+). Residues 121-241 are a coiled coil; that stretch reads EQHQVTGIDD…LQERLAETDR (121 aa). Residues 277-475 enclose the B30.2/SPRY domain; that stretch reads PLQYTIWKSL…QPLRINTVRI (199 aa).

It belongs to the TRIM/RBCC family. As to quaternary structure, interacts with the ubiquitin-conjugating enzyme, UBE2D2. Post-translationally, polyubiquitinated, autoubiquitinated in the presence of UBE2D2.

It is found in the cytoplasm. It catalyses the reaction S-ubiquitinyl-[E2 ubiquitin-conjugating enzyme]-L-cysteine + [acceptor protein]-L-lysine = [E2 ubiquitin-conjugating enzyme]-L-cysteine + N(6)-ubiquitinyl-[acceptor protein]-L-lysine.. The protein operates within protein modification; protein ubiquitination. E3 ubiquitin ligase that plays a role in antifungal immunity by mediating 'Lys-27'-linked ubiquitination of CARD9 downstream of C-type lectin receptors; leading to CARD9 activation, followed by activation of NF-kappa-B and MAP kinase p38 pathways. E3 ubiquitin ligase activity is dependent on E2 ubiquitin-conjugating enzyme UBE2D2. The sequence is that of E3 ubiquitin-protein ligase TRIM62 from Mus musculus (Mouse).